A 744-amino-acid polypeptide reads, in one-letter code: Protein zyg-11 homolog B (744 aa).

LRR repeat units follow at residues 185 to 208 (LPRL…LACK), 216 to 236 (MHHL…VREL), and 237 to 261 (KHLN…LLEQ).

It belongs to the zyg-11 family. As to quaternary structure, interacts with ELOC/Elongin C. Part of an E3 ubiquitin ligase complex including ZYG11B, CUL2 and Elongin BC.

Serves as substrate adapter subunit in the E3 ubiquitin ligase complex ZYG11B-CUL2-Elongin BC. Acts redudantly with ZER1 to target substrates bearing N-terminal glycine degrons for proteasomal degradation. Involved in the clearance of proteolytic fragments generated by caspase cleavage during apoptosis since N-terminal glycine degrons are strongly enriched at caspase cleavage sites. Also important in the quality control of protein N-myristoylation in which N-terminal glycine degrons are conditionally exposed after a failure of N-myristoylation. The sequence is that of Protein zyg-11 homolog B from Mus musculus (Mouse).